Consider the following 237-residue polypeptide: Ribosomal RNA small subunit methyltransferase G (237 aa).

Residues glycine 78, phenylalanine 83, 129 to 130 (AE), and arginine 148 each bind S-adenosyl-L-methionine.

The protein belongs to the methyltransferase superfamily. RNA methyltransferase RsmG family.

Its subcellular location is the cytoplasm. In terms of biological role, specifically methylates the N7 position of a guanine in 16S rRNA. The sequence is that of Ribosomal RNA small subunit methyltransferase G from Streptococcus pyogenes serotype M6 (strain ATCC BAA-946 / MGAS10394).